A 510-amino-acid polypeptide reads, in one-letter code: Zinc finger protein 692 (510 aa).

Disordered regions lie at residues 1–20 (MAAS…RQLD) and 121–306 (WGPS…EDTA). Serine 161 bears the Phosphoserine mark. The span at 163–172 (CDERAQEARM) shows a compositional bias: basic and acidic residues. Residues 188 to 201 (EDGEEEEEDEEEML) are compositionally biased toward acidic residues. At serine 225 the chain carries Phosphoserine. The span at 237–265 (APAPAAVPAPLASPSSSASSLGSGAPGPV) shows a compositional bias: low complexity. A compositionally biased stretch (polar residues) spans 278–297 (QADQQTEPLASPGSQAQSAL). 5 consecutive C2H2-type zinc fingers follow at residues 322 to 347 (LPCD…KYQH), 353 to 377 (FSCP…VKLH), 383 to 405 (YICE…RRIH), 411 to 433 (LQCE…RRKH), and 442 to 465 (FPCE…SKSH). The residue at position 464 (serine 464) is a Phosphoserine.

Belongs to the krueppel C2H2-type zinc-finger protein family. In terms of processing, phosphorylation at Ser-464 results in loss of DNA-binding activity.

The protein localises to the nucleus. In terms of biological role, may act as an transcriptional repressor for PCK1 gene expression, in turn may participate in the hepatic gluconeogenesis regulation through the activated AMPK signaling pathway. The sequence is that of Zinc finger protein 692 from Bos taurus (Bovine).